The chain runs to 495 residues: Cysteine-rich secretory protein LCCL domain-containing 2 (495 aa).

The signal sequence occupies residues 1–22 (MSCLLNNMVLMGLALLVCGVQA). An N-linked (GlcNAc...) asparagine glycan is attached at Asn-27. In terms of domain architecture, SCP spans 60-200 (LMLHNKLRGQ…ENAVYLVCNY (141 aa)). LCCL domains lie at 282 to 377 (MTQV…SSSF) and 383 to 486 (TETA…QNGN). 4 disulfides stabilise this stretch: Cys-288–Cys-306, Cys-310–Cys-330, Cys-389–Cys-411, and Cys-415–Cys-438.

As to quaternary structure, binds to heparin, dermatan sulfate and chondroitin sulfate. In terms of tissue distribution, present in kidney renal tubules (at protein level).

The protein localises to the secreted. Its function is as follows. Promotes matrix assembly. This chain is Cysteine-rich secretory protein LCCL domain-containing 2 (Crispld2), found in Mus musculus (Mouse).